The primary structure comprises 255 residues: Type III pantothenate kinase (255 aa).

6 to 13 is a binding site for ATP; that stretch reads DIGNTTSE. Residues Y100 and 107–110 contribute to the substrate site; that span reads GIDR. D109 acts as the Proton acceptor in catalysis. D129 lines the K(+) pocket. Residue T132 coordinates ATP. T184 is a substrate binding site.

The protein belongs to the type III pantothenate kinase family. As to quaternary structure, homodimer. NH4(+) is required as a cofactor. Requires K(+) as cofactor.

It localises to the cytoplasm. It carries out the reaction (R)-pantothenate + ATP = (R)-4'-phosphopantothenate + ADP + H(+). It participates in cofactor biosynthesis; coenzyme A biosynthesis; CoA from (R)-pantothenate: step 1/5. Its function is as follows. Catalyzes the phosphorylation of pantothenate (Pan), the first step in CoA biosynthesis. In Persephonella marina (strain DSM 14350 / EX-H1), this protein is Type III pantothenate kinase.